The following is a 140-amino-acid chain: Holo-[acyl-carrier-protein] synthase (140 aa).

2 residues coordinate Mg(2+): Asp-9 and Glu-63.

The protein belongs to the P-Pant transferase superfamily. AcpS family. Mg(2+) is required as a cofactor.

It localises to the cytoplasm. The enzyme catalyses apo-[ACP] + CoA = holo-[ACP] + adenosine 3',5'-bisphosphate + H(+). Functionally, transfers the 4'-phosphopantetheine moiety from coenzyme A to a Ser of acyl-carrier-protein. This Paraburkholderia phytofirmans (strain DSM 17436 / LMG 22146 / PsJN) (Burkholderia phytofirmans) protein is Holo-[acyl-carrier-protein] synthase.